The following is a 106-amino-acid chain: Immunoglobulin lambda constant 7 (106 aa).

The Ig-like domain occupies 7 to 101 (PSVTLFPPSS…EGSTVEKTVA (95 aa)). Cysteine 28 and cysteine 87 are oxidised to a cystine.

As to quaternary structure, immunoglobulins are composed of two identical heavy chains and two identical light chains; disulfide-linked.

It localises to the secreted. Its subcellular location is the cell membrane. Its function is as follows. Constant region of immunoglobulin light chains. Immunoglobulins, also known as antibodies, are membrane-bound or secreted glycoproteins produced by B lymphocytes. In the recognition phase of humoral immunity, the membrane-bound immunoglobulins serve as receptors which, upon binding of a specific antigen, trigger the clonal expansion and differentiation of B lymphocytes into immunoglobulins-secreting plasma cells. Secreted immunoglobulins mediate the effector phase of humoral immunity, which results in the elimination of bound antigens. The antigen binding site is formed by the variable domain of one heavy chain, together with that of its associated light chain. Thus, each immunoglobulin has two antigen binding sites with remarkable affinity for a particular antigen. The variable domains are assembled by a process called V-(D)-J rearrangement and can then be subjected to somatic hypermutations which, after exposure to antigen and selection, allow affinity maturation for a particular antigen. This chain is Immunoglobulin lambda constant 7, found in Homo sapiens (Human).